The primary structure comprises 382 residues: uncharacterized protein (382 aa).

A run of 12 helical transmembrane segments spans residues 8-28 (VMLL…LNTL), 45-65 (MVSS…GYLI), 75-95 (YLAS…VGFW), 102-122 (FIAG…LMCS), 131-151 (LLAA…LLVS), 157-177 (LLHV…PLLF), 204-224 (LGVN…GLMP), 231-251 (GMAN…GILG), 270-290 (VQVF…AMAP), 291-311 (ALFI…AWAC), 325-345 (ALLL…AMLM), and 349-369 (SDNL…LMLL).

Belongs to the major facilitator superfamily. YcaD (TC 2.A.1.26) family.

It is found in the cell inner membrane. This is an uncharacterized protein from Salmonella agona (strain SL483).